The following is a 430-amino-acid chain: Aspartate aminotransferase, mitochondrial (430 aa).

A mitochondrion-targeting transit peptide spans 1–29; it reads MALLHSGRVLSGIAAAFHPGLAAAASARA. At Thr48 the chain carries Phosphothreonine. Lys59 bears the N6-acetyllysine mark. Residue Gly65 participates in substrate binding. The residue at position 73 (Lys73) is an N6-acetyllysine; alternate. N6-succinyllysine; alternate is present on Lys73. Lys82 is subject to N6-acetyllysine. Position 90 is an N6-acetyllysine; alternate (Lys90). Lys90 bears the N6-succinyllysine; alternate mark. Tyr96 bears the 3'-nitrotyrosine; alternate mark. Tyr96 is subject to Phosphotyrosine; alternate. N6-acetyllysine; alternate is present on residues Lys107 and Lys122. 2 positions are modified to N6-succinyllysine; alternate: Lys107 and Lys122. Ser143 is modified (phosphoserine). Lys159 bears the N6-acetyllysine; alternate mark. At Lys159 the chain carries N6-succinyllysine; alternate. A substrate-binding site is contributed by Trp162. Residue Lys185 is modified to N6-acetyllysine; alternate. The residue at position 185 (Lys185) is an N6-succinyllysine; alternate. Asn215 lines the substrate pocket. Lys227 is subject to N6-succinyllysine. An N6-acetyllysine modification is found at Lys234. N6-acetyllysine; alternate occurs at positions 279 and 296. Lys279 is subject to N6-(pyridoxal phosphate)lysine; alternate. Lys296 bears the N6-succinyllysine; alternate mark. Lys302 is modified (N6-acetyllysine). The residue at position 309 (Lys309) is an N6-acetyllysine; alternate. Lys309 is subject to N6-succinyllysine; alternate. At Arg313 the chain carries Asymmetric dimethylarginine. Thr333 is subject to Phosphothreonine. Position 338 is an N6-acetyllysine; alternate (Lys338). Residue Lys338 is modified to N6-succinyllysine; alternate. Residue Lys345 is modified to N6-acetyllysine. At Lys363 the chain carries N6-acetyllysine; alternate. Lys363 is subject to N6-succinyllysine; alternate. Residues Lys364 and Lys387 each carry the N6-acetyllysine modification. An N6-acetyllysine; alternate mark is found at Lys396 and Lys404. N6-succinyllysine; alternate occurs at positions 396 and 404. Substrate is bound at residue Arg407.

Belongs to the class-I pyridoxal-phosphate-dependent aminotransferase family. In terms of assembly, homodimer. The cofactor is pyridoxal 5'-phosphate.

The protein localises to the mitochondrion matrix. It localises to the cell membrane. The catalysed reaction is L-aspartate + 2-oxoglutarate = oxaloacetate + L-glutamate. It catalyses the reaction L-kynurenine + 2-oxoglutarate = kynurenate + L-glutamate + H2O. In terms of biological role, catalyzes the irreversible transamination of the L-tryptophan metabolite L-kynurenine to form kynurenic acid (KA). As a member of the malate-aspartate shuttle, it has a key role in the intracellular NAD(H) redox balance. Is important for metabolite exchange between mitochondria and cytosol, and for amino acid metabolism. Facilitates cellular uptake of long-chain free fatty acids. In Macaca fascicularis (Crab-eating macaque), this protein is Aspartate aminotransferase, mitochondrial (GOT2).